We begin with the raw amino-acid sequence, 129 residues long: Small ribosomal subunit protein uS11 (129 aa).

The protein belongs to the universal ribosomal protein uS11 family. Part of the 30S ribosomal subunit. Interacts with proteins S7 and S18. Binds to IF-3.

Located on the platform of the 30S subunit, it bridges several disparate RNA helices of the 16S rRNA. Forms part of the Shine-Dalgarno cleft in the 70S ribosome. The protein is Small ribosomal subunit protein uS11 of Oceanobacillus iheyensis (strain DSM 14371 / CIP 107618 / JCM 11309 / KCTC 3954 / HTE831).